Consider the following 453-residue polypeptide: Nuclear distribution protein nudF-2 (453 aa).

Residues 9–41 (QADELHRALIAYLTAANLPNTAAALREELNLSE) enclose the LisH domain. Residues 62–88 (SVVRLQKKIMDLESRNHILQSELDNAT) are a coiled coil. The interval 84–107 (LDNATPTSRQNKDPVAWLPRAPPR) is disordered. WD repeat units lie at residues 112–153 (SHRD…RTIK), 155–195 (HTKA…KNIR), 199–239 (GHDH…CVKT), 242–281 (GHAE…PEPK), 286–345 (GHEH…IKTL), 347–386 (GHDN…KCVK), and 391–449 (AHGH…LNVR).

This sequence belongs to the WD repeat LIS1/nudF family. In terms of assembly, self-associates. Interacts with ro-11/nde1 and dynein.

The protein resides in the cytoplasm. Its subcellular location is the cytoskeleton. It is found in the spindle pole. Functionally, positively regulates the activity of the minus-end directed microtubule motor protein dynein. May enhance dynein-mediated microtubule sliding by targeting dynein to the microtubule plus end. Required for nuclear migration during vegetative growth as well as development. Required for retrograde early endosome (EE) transport from the hyphal tip. Required for localization of dynein to the mitotic spindle poles. Recruits additional proteins to the dynein complex at SPBs. The sequence is that of Nuclear distribution protein nudF-2 (nmp-1) from Neurospora crassa (strain ATCC 24698 / 74-OR23-1A / CBS 708.71 / DSM 1257 / FGSC 987).